Here is a 402-residue protein sequence, read N- to C-terminus: Putative neuropeptide Y receptor 11 (402 aa).

Topologically, residues 1–45 (MGSVNESCDNYVEIFNKINYFFRDDQVINGTEYSPKEFGYFITFA) are extracellular. Residues Asn5 and Asn29 are each glycosylated (N-linked (GlcNAc...) asparagine). A helical membrane pass occupies residues 46 to 66 (YMLIILFGAIGNFLTIIVVIL). Residues 67–85 (NPAMRTTRNFFILNLALSD) lie on the Cytoplasmic side of the membrane. A helical membrane pass occupies residues 86-106 (FFVCIVTAPTTLYTVLYMFWP). Residues 107 to 122 (FSRTLCKIAGSLQGFN) are Extracellular-facing. The cysteines at positions 112 and 194 are disulfide-linked. A helical membrane pass occupies residues 123-143 (IFLSTFSIASIAVDRYVLIIF). The Cytoplasmic segment spans residues 144–152 (PTKRERQQN). The chain crosses the membrane as a helical span at residues 153–173 (LSFCFFIMIWVISLILAVPLL). The Extracellular portion of the chain corresponds to 174-210 (QASDLTPVFVEPSCDLALYICHEQNEIWEKMIISKGT). Residues 211 to 231 (YTLAVLITQYAFPLFSLVFAY) form a helical membrane-spanning segment. At 232–272 (SRIAHRMKLRFANRNQNVTTNTNTSQRRRSVVERQRRTHLL) the chain is on the cytoplasmic side. The helical transmembrane segment at 273 to 293 (LVCVVAVFAVAWLPLNVFHIF) threads the bilayer. Topologically, residues 294–306 (NTFELVNSFSVTT) are extracellular. Residues 307–328 (FSICHCLAMCSACLNPLIYAFF) form a helical membrane-spanning segment. The Cytoplasmic segment spans residues 329-402 (NHNFRIEFMH…LSAMEQDEQL (74 aa)).

Belongs to the G-protein coupled receptor 1 family.

It is found in the cell membrane. In terms of biological role, could be a receptor for neuropeptide Y and peptide YY. The chain is Putative neuropeptide Y receptor 11 (npr-11) from Caenorhabditis elegans.